Reading from the N-terminus, the 222-residue chain is Eukaryotic translation initiation factor 3 subunit K (222 aa).

One can recognise a PCI domain in the interval 46 to 208; sequence YDLEANLAVL…KIKTKNITEK (163 aa).

Belongs to the eIF-3 subunit K family. As to quaternary structure, component of the eukaryotic translation initiation factor 3 (eIF-3) complex. The eIF-3 complex interacts with pix.

The protein resides in the cytoplasm. Its function is as follows. Component of the eukaryotic translation initiation factor 3 (eIF-3) complex, which is involved in protein synthesis of a specialized repertoire of mRNAs and, together with other initiation factors, stimulates binding of mRNA and methionyl-tRNAi to the 40S ribosome. The eIF-3 complex specifically targets and initiates translation of a subset of mRNAs involved in cell proliferation. The sequence is that of Eukaryotic translation initiation factor 3 subunit K from Drosophila willistoni (Fruit fly).